We begin with the raw amino-acid sequence, 372 residues long: tRNA-specific 2-thiouridylase MnmA (372 aa).

ATP-binding positions include 16-23 (GMSGGVDS) and methionine 42. The interval 102–104 (NPD) is interaction with target base in tRNA. The active-site Nucleophile is cysteine 107. Cysteines 107 and 205 form a disulfide. Glycine 132 is an ATP binding site. The interaction with tRNA stretch occupies residues 155–157 (KDQ). Catalysis depends on cysteine 205, which acts as the Cysteine persulfide intermediate. The interaction with tRNA stretch occupies residues 317–318 (RY).

It belongs to the MnmA/TRMU family.

The protein resides in the cytoplasm. It catalyses the reaction S-sulfanyl-L-cysteinyl-[protein] + uridine(34) in tRNA + AH2 + ATP = 2-thiouridine(34) in tRNA + L-cysteinyl-[protein] + A + AMP + diphosphate + H(+). Catalyzes the 2-thiolation of uridine at the wobble position (U34) of tRNA, leading to the formation of s(2)U34. This chain is tRNA-specific 2-thiouridylase MnmA, found in Shewanella baltica (strain OS195).